The following is a 932-amino-acid chain: DNA mismatch repair protein MutS (932 aa).

615–622 (GPNMAGKS) is an ATP binding site.

This sequence belongs to the DNA mismatch repair MutS family.

Functionally, this protein is involved in the repair of mismatches in DNA. It is possible that it carries out the mismatch recognition step. This protein has a weak ATPase activity. In Clostridium botulinum (strain Hall / ATCC 3502 / NCTC 13319 / Type A), this protein is DNA mismatch repair protein MutS.